The following is a 224-amino-acid chain: Peroxynitrite isomerase 2 (224 aa).

The GXWXGXG signature appears at 71–77 (GVWRGEG). The heme b site is built by Lys187 and His214.

The protein belongs to the nitrobindin family. In terms of assembly, homodimer. Heme b serves as cofactor.

It catalyses the reaction peroxynitrite = nitrate. It functions in the pathway nitrogen metabolism. Its function is as follows. Heme-binding protein able to scavenge peroxynitrite and to protect free L-tyrosine against peroxynitrite-mediated nitration, by acting as a peroxynitrite isomerase that converts peroxynitrite to nitrate. Therefore, this protein likely plays a role in peroxynitrite sensing and in the detoxification of reactive nitrogen and oxygen species (RNS and ROS, respectively). Is able to bind nitric oxide (NO) in vitro, but may act as a sensor of peroxynitrite levels in vivo. This Mycobacterium sp. (strain JLS) protein is Peroxynitrite isomerase 2.